The primary structure comprises 285 residues: Glycine--tRNA ligase alpha subunit (285 aa).

Belongs to the class-II aminoacyl-tRNA synthetase family. In terms of assembly, tetramer of two alpha and two beta subunits.

The protein resides in the cytoplasm. The enzyme catalyses tRNA(Gly) + glycine + ATP = glycyl-tRNA(Gly) + AMP + diphosphate. The polypeptide is Glycine--tRNA ligase alpha subunit (Granulibacter bethesdensis (strain ATCC BAA-1260 / CGDNIH1)).